A 566-amino-acid chain; its full sequence is FAD-dependent monooxygenase asqG (566 aa).

An N-terminal signal peptide occupies residues 1–19; it reads MAAFTVIIIGGSISGLTLA. Residues Glu-33, Val-47, Arg-113, Asp-313, and Ala-326 each contribute to the FAD site. Transmembrane regions (helical) follow at residues 448–468 and 482–502; these read ASST…GAVW and GYTL…ASAV.

The protein belongs to the paxM FAD-dependent monooxygenase family. The cofactor is FAD.

The protein resides in the membrane. It catalyses the reaction [(1'E)-3'-hydroxy-3',7'-dimethylocta-1',6'-dien-1'-yl]-quinolinone B + NADPH + O2 + H(+) = [(1'E)-5'-(3',3'-dimethyloxiran-2'-yl)-3'-hydroxy-3'-methylpent-1'-en-1'-yl]-quinolinone B + NADP(+) + H2O. The protein operates within secondary metabolite biosynthesis. It participates in alkaloid biosynthesis. Its pathway is mycotoxin biosynthesis. Its function is as follows. FAD-dependent monooxygenase; part of the gene cluster that mediates the biosynthesis of the aspoquinolone mycotoxins. Within the pathway, the FAD-dependent monooxygenase asqG catalyzes the epoxidation of the terminal C7'-C8' olefin to produce the intermediate [(1'E)-5'-(3',3'-dimethyloxiran-2'-yl)-3'-hydroxy-3'-methylpent-1'-en-1'-yl]-quinolinone B. The first step of the pathway is catalyzed by the nonribosomal peptide synthetase asqK that condenses anthranilic acid and O-methyl-L-tyrosine to produce 4'-methoxycyclopeptin. 4'-methoxycyclopeptin is then converted to 4'-methoxydehydrocyclopeptin by the ketoglutarate-dependent dioxygenase asqJ. AsqJ also converts its first product 4'-methoxydehydrocyclopeptin to 4'-methoxycyclopenin. The following conversion of 4'-methoxycyclopenin into 4'-methoxyviridicatin is catalyzed by the cyclopenase asqI. 4'-methoxyviridicatin is the precursor of quinolone natural products, and is further converted to quinolinone B. The prenyltransferase asqH1 then catalyzes the canonical Friedel-Crafts alkylation of quinolinone B with dimethylallyl cation to yield dimethylallyl quinolone, which is subjected to FAD-dependent dehydrogenation by the FAD-linked oxidoreductase asqF to yield conjugated aryl diene. The delta(3') double bond then serves as the site of the second alkylation with DMAPP catalyzed by the prenyltransferase asqH2 to yield a carbenium ion intermediate, which can be attacked by H(2)O to yield a styrenyl quinolone containing a C3'-hydroxyprenyl chain. The FAD-dependent monooxygenase asqG performs epoxidation of the terminal C7'-C8' olefin. Finally, after dehydratation of the epoxide at C3 by asqC, the quinolone epoxide rearrangement protein asqO catalyzes an enzymatic 3-exo-tet cyclization to yield the cyclopropyl-THF ring system in aspoquinolone. In Emericella nidulans (strain FGSC A4 / ATCC 38163 / CBS 112.46 / NRRL 194 / M139) (Aspergillus nidulans), this protein is FAD-dependent monooxygenase asqG.